The sequence spans 692 residues: Elongation factor G (692 aa).

Positions 8-283 (KNTRNIGIMA…AVLDYLPSPV (276 aa)) constitute a tr-type G domain. Residues 17 to 24 (AHIDAGKT), 81 to 85 (DTPGH), and 135 to 138 (NKMD) each bind GTP.

Belongs to the TRAFAC class translation factor GTPase superfamily. Classic translation factor GTPase family. EF-G/EF-2 subfamily.

Its subcellular location is the cytoplasm. In terms of biological role, catalyzes the GTP-dependent ribosomal translocation step during translation elongation. During this step, the ribosome changes from the pre-translocational (PRE) to the post-translocational (POST) state as the newly formed A-site-bound peptidyl-tRNA and P-site-bound deacylated tRNA move to the P and E sites, respectively. Catalyzes the coordinated movement of the two tRNA molecules, the mRNA and conformational changes in the ribosome. In Exiguobacterium sibiricum (strain DSM 17290 / CCUG 55495 / CIP 109462 / JCM 13490 / 255-15), this protein is Elongation factor G.